The sequence spans 915 residues: MASSSSSLAFSLSLLLALILCFSPTQSYKTIGKGYRLVSIEESPDGGFIGYLQVKQKNKIYGSDITTLRLFVKHETDSRLRVHITDAKQQRWEVPYNLLPREQPPQVGKVIGKSRKSPITVQEISGSELIFSYTTDPFTFAVKRRSNHETLFNTTSSLVFKDQYLEISTSLPKEASLYGLGENSQANGIKLVPNEPYTLYTEDVSAINLNTDLYGSHPMYMDLRNVGGKAYAHAVLLLNSNGMDVFYRGDSLTYKVIGGVFDFYFIAGPSPLNVVDQYTQLIGRPAPMPYWSLGFHQCRWGYHNLSVVEDVVDNYKKAKIPLDVIWNDDDHMDGHKDFTLNPVAYPRAKLLAFLDKIHKIGMKYIVINDPGIGVNASYGTFQRAMAADVFIKYEGKPFLAQVWPGPVYFPDFLNPKTVSWWGDEIKRFHDLVPIDGLWIDMNEVSNFCSGLCTIPEGKQCPSGEGPGWVCCLDCKNITKTRWDDPPYKINATGVVAPVGFKTIATSATHYNGVREYDAHSIYGFSETIATHKGLLNVQGKRPFILSRSTFVGSGQYAAHWTGDNQGTWQSLQVSISTMLNFGIFGVPMVGSDICGFYPQPTEELCNRWIEVGAFYPFSRDHANYYSPRQELYQWDTVADSARNALGMRYKILPFLYTLNYEAHMTGAPIARPLFFSFPEYTECYGNSRQFLLGSSFMISPVLEQGKTEVEALFPPGSWYHMFDMTQAVVSKNGKRVTLPAPLNFVNVHLYQNTILPTQQGGLISKDARTTPFSLVIAFPAGASEGYATGKLYLDEDELPEMKLGNGQSTYVDFYASVGNGTMKMWSQVKEGKFALSKGWVIEKVSVLGLRGAGQVSEIQINGSPMTKKIEVSSKEHTYVIGLEDEEENKSVMVEVRGLEMLVGKDFNMSWKMGIN.

The first 27 residues, 1-27, serve as a signal peptide directing secretion; the sequence is MASSSSSLAFSLSLLLALILCFSPTQS. N-linked (GlcNAc...) asparagine glycans are attached at residues asparagine 153, asparagine 304, and asparagine 375. Active-site residues include aspartate 440 and glutamate 443. Asparagine 476 and asparagine 490 each carry an N-linked (GlcNAc...) asparagine glycan. Catalysis depends on aspartate 563, which acts as the Proton donor. 3 N-linked (GlcNAc...) asparagine glycosylation sites follow: asparagine 819, asparagine 888, and asparagine 907.

This sequence belongs to the glycosyl hydrolase 31 family. In terms of tissue distribution, expressed in roots, stems, leaves, flowers and siliques. Expressed in cell types undergoing cell wall modifications, including trichomes, vasculature, stomata, and elongating anther filaments. Not detected in pollen.

Its subcellular location is the secreted. The protein resides in the cell wall. The protein localises to the extracellular space. It is found in the apoplast. It carries out the reaction Hydrolysis of terminal, non-reducing alpha-D-xylose residues with release of alpha-D-xylose.. Functionally, glycoside hydrolase releasing xylosyl residues from xyloglucan oligosaccharides at the non-reducing end. Has alpha-xylosidase activity against xylan oligosaccharides. Also has alpha-glucosidase activity against p-nitrophenyl-alpha-D-glucopyranoside. No activity against p-nitrophenyl-D-xyloside. This chain is Alpha-xylosidase 1, found in Arabidopsis thaliana (Mouse-ear cress).